The chain runs to 132 residues: Small ribosomal subunit protein uS8 (132 aa).

The protein belongs to the universal ribosomal protein uS8 family. As to quaternary structure, part of the 30S ribosomal subunit. Contacts proteins S5 and S12.

Functionally, one of the primary rRNA binding proteins, it binds directly to 16S rRNA central domain where it helps coordinate assembly of the platform of the 30S subunit. This is Small ribosomal subunit protein uS8 from Clostridium perfringens (strain ATCC 13124 / DSM 756 / JCM 1290 / NCIMB 6125 / NCTC 8237 / Type A).